A 224-amino-acid polypeptide reads, in one-letter code: tRNA (guanine-N(7)-)-methyltransferase (224 aa).

Positions 54, 79, 106, and 129 each coordinate S-adenosyl-L-methionine. Residue aspartate 129 is part of the active site. Substrate contacts are provided by lysine 133 and aspartate 165.

The protein belongs to the class I-like SAM-binding methyltransferase superfamily. TrmB family.

It carries out the reaction guanosine(46) in tRNA + S-adenosyl-L-methionine = N(7)-methylguanosine(46) in tRNA + S-adenosyl-L-homocysteine. It functions in the pathway tRNA modification; N(7)-methylguanine-tRNA biosynthesis. Catalyzes the formation of N(7)-methylguanine at position 46 (m7G46) in tRNA. In Chlamydia abortus (strain DSM 27085 / S26/3) (Chlamydophila abortus), this protein is tRNA (guanine-N(7)-)-methyltransferase.